Here is a 1710-residue protein sequence, read N- to C-terminus: Chromodomain-helicase-DNA-binding protein 1 (1710 aa).

Residues 1 to 10 (MNGHSDEESV) show a composition bias toward basic and acidic residues. A disordered region spans residues 1-252 (MNGHSDEESV…KEDEEMKTDS (252 aa)). Over residues 35 to 63 (SSGSSSDGSSSQSGSSDSDSGSESGSQSE) the composition is skewed to low complexity. Over residues 67–85 (DTSRENKVQAKPPKVDGAE) the composition is skewed to basic and acidic residues. The segment covering 105–121 (QQQQQQQQQHQASSNSG) has biased composition (low complexity). Over residues 122–136 (SEEDSSSSEDSDDSS) the composition is skewed to acidic residues. The span at 152-163 (SGSGSPSQSGSD) shows a compositional bias: low complexity. Positions 187–210 (KVKSRKPQNRSKSKNGKKILGQKK) are enriched in basic residues. Serine 215 and serine 216 each carry phosphoserine. Residues 215–226 (SSEEDDDEEDYD) show a composition bias toward acidic residues. Threonine 237 is modified (phosphothreonine). Residue serine 241 is modified to Phosphoserine. Threonine 250 carries the phosphothreonine modification. Residue serine 252 is modified to Phosphoserine. Chromo domains are found at residues 272-364 (ETIE…RWLK) and 389-452 (QIVE…TPFK). Phosphoserine is present on serine 471. A Helicase ATP-binding domain is found at 493-663 (AHSWCKGNSC…WSLLHFIMPE (171 aa)). 506-513 (DEMGLGKT) is an ATP binding site. The DEAH box signature appears at 614 to 617 (DEAH). The 152-residue stretch at 792-943 (LLDKLLIRLR…HLVIQRMDTT (152 aa)) folds into the Helicase C-terminal domain. A phosphoserine mark is found at serine 1025, serine 1040, serine 1081, serine 1085, serine 1096, serine 1098, serine 1100, and serine 1102. The segment at 1080–1120 (ISFNGSEGRRSRSRRYSGSDSDSISEGKRPKKRGRPRTIPR) is disordered. Positions 1108–1117 (RPKKRGRPRT) are enriched in basic residues. Phosphoserine is present on serine 1161. 2 disordered regions span residues 1321–1408 (EALS…ESEE) and 1502–1710 (KKRQ…SRKT). Over residues 1329–1345 (SKRRKARAKKNKAMKSI) the composition is skewed to basic residues. Phosphoserine is present on residues serine 1353, serine 1355, serine 1356, serine 1360, serine 1363, serine 1371, and serine 1373. Over residues 1370–1379 (LSESKSDGRE) the composition is skewed to basic and acidic residues. The CHD1 helical C-terminal domain (CHCT) stretch occupies residues 1409–1511 (LDQKTFSICK…KKRQESQQNS (103 aa)). Residues 1507-1516 (SQQNSDQNSN) are compositionally biased toward low complexity. Basic and acidic residues-rich tracts occupy residues 1523 to 1573 (RNPD…DSRK) and 1582 to 1670 (GKDH…DHRA). Serine 1622 is subject to Phosphoserine. Repeat copies occupy residues 1628-1632 (HSDHR), 1634-1638 (HSDHR), and 1640-1644 (HSDHR). Positions 1628 to 1644 (HSDHRSHSDHRLHSDHR) are 3 X 5 AA repeats of H-S-D-H-R. 3 positions are modified to phosphoserine: serine 1677, arginine 1688, and serine 1689. Over residues 1690 to 1701 (PFEHSVEHKSTP) the composition is skewed to basic and acidic residues.

Belongs to the SNF2/RAD54 helicase family. Component of the SAGA complex. Interacts with BCLAF1, NCoR, SRP20 and SAFB. Specifically interacts with methylated H3K4me2 and H3K4me3. Interacts with the FACT complex, the PAF complex and the U2 snRNP. Interacts directly with PAF1, SFA3A1, SFA3A2, SFA3A3, SNF2 and SSRP1. As to expression, expressed in many tissues including in the brain, where the highest level of expression is found in the cerebellum and basal ganglia.

The protein resides in the nucleus. The protein localises to the cytoplasm. The catalysed reaction is ATP + H2O = ADP + phosphate + H(+). ATP-dependent chromatin-remodeling factor which functions as substrate recognition component of the transcription regulatory histone acetylation (HAT) complex SAGA. Regulates polymerase II transcription. Also required for efficient transcription by RNA polymerase I, and more specifically the polymerase I transcription termination step. Regulates negatively DNA replication. Not only involved in transcription-related chromatin-remodeling, but also required to maintain a specific chromatin configuration across the genome. Is also associated with histone deacetylase (HDAC) activity. Required for the bridging of SNF2, the FACT complex, the PAF complex as well as the U2 snRNP complex to H3K4me3. Functions to modulate the efficiency of pre-mRNA splicing in part through physical bridging of spliceosomal components to H3K4me3. Required for maintaining open chromatin and pluripotency in embryonic stem cells. The chain is Chromodomain-helicase-DNA-binding protein 1 from Homo sapiens (Human).